The following is a 386-amino-acid chain: Methylthioribose-1-phosphate isomerase (386 aa).

Residue aspartate 258 is the Proton donor of the active site.

The protein belongs to the eIF-2B alpha/beta/delta subunits family. MtnA subfamily.

It is found in the cytoplasm. The protein resides in the nucleus. It catalyses the reaction 5-(methylsulfanyl)-alpha-D-ribose 1-phosphate = 5-(methylsulfanyl)-D-ribulose 1-phosphate. Its pathway is amino-acid biosynthesis; L-methionine biosynthesis via salvage pathway; L-methionine from S-methyl-5-thio-alpha-D-ribose 1-phosphate: step 1/6. Catalyzes the interconversion of methylthioribose-1-phosphate (MTR-1-P) into methylthioribulose-1-phosphate (MTRu-1-P). In Postia placenta (strain ATCC 44394 / Madison 698-R) (Brown rot fungus), this protein is Methylthioribose-1-phosphate isomerase.